A 508-amino-acid polypeptide reads, in one-letter code: Glucose-1-phosphate adenylyltransferase small subunit 1, chloroplastic (508 aa).

Positions 1–27 are disordered; the sequence is MSSIVTSGVINVPRSSSSSKNLSFSSS. A chloroplast-targeting transit peptide spans 1–59; the sequence is MSSIVTSGVINVPRSSSSSKNLSFSSSSQLSGNKILTVSGNGAPRGRCTLKHVFLTPKA. Residues 15-27 are compositionally biased toward low complexity; that stretch reads SSSSSKNLSFSSS.

The protein belongs to the bacterial/plant glucose-1-phosphate adenylyltransferase family. As to quaternary structure, heterotetramer. Seeds.

The protein localises to the plastid. Its subcellular location is the chloroplast. The catalysed reaction is alpha-D-glucose 1-phosphate + ATP + H(+) = ADP-alpha-D-glucose + diphosphate. The protein operates within glycan biosynthesis; starch biosynthesis. Activated by 3'phosphoglycerate, inhibited by orthophosphate. Allosteric regulation. In terms of biological role, this protein plays a role in synthesis of starch. It catalyzes the synthesis of the activated glycosyl donor, ADP-glucose from Glc-1-P and ATP. The chain is Glucose-1-phosphate adenylyltransferase small subunit 1, chloroplastic (AGPC) from Vicia faba (Broad bean).